Consider the following 182-residue polypeptide: Adenylate kinase (182 aa).

ATP is bound at residue 12–17; it reads GAGKGT. The tract at residues 32 to 61 is NMP; sequence STGDLLRDEVSSGSVLGIKAAEIMNKGELV. AMP is bound by residues threonine 33, arginine 38, 59–61, 85–88, and glutamine 92; these read ELV and GFPR. An LID region spans residues 126-132; that stretch reads ERGRQDD. Residue arginine 127 participates in ATP binding. Arginine 129 and arginine 140 together coordinate AMP. Alanine 168 is an ATP binding site.

Belongs to the adenylate kinase family. In terms of assembly, monomer.

It localises to the cytoplasm. The enzyme catalyses AMP + ATP = 2 ADP. It participates in purine metabolism; AMP biosynthesis via salvage pathway; AMP from ADP: step 1/1. Catalyzes the reversible transfer of the terminal phosphate group between ATP and AMP. Plays an important role in cellular energy homeostasis and in adenine nucleotide metabolism. This Prochlorococcus marinus (strain NATL1A) protein is Adenylate kinase.